The following is a 574-amino-acid chain: Sulfate adenylyltransferase (574 aa).

Positions 1–169 (MSNPPHGGVL…VEAINKLNHY (169 aa)) are N-terminal. Residues 170–394 (DYVALRYTPA…LRESSRPRST (225 aa)) form a catalytic region. Gln-197 contacts sulfate. ATP contacts are provided by residues 197-200 (QTRN) and 291-294 (GRDH). Catalysis depends on residues Thr-198, Arg-199, and Asn-200. Residue Arg-199 coordinates sulfate. Ala-295 contributes to the sulfate binding site. Val-333 serves as a coordination point for ATP. The allosteric regulation domain; adenylyl-sulfate kinase-like stretch occupies residues 395 to 574 (QGFTIFLTGY…LETEGFFDRA (180 aa)). 3'-phosphoadenylyl sulfate-binding positions include 434 to 437 (DTVR), Arg-451, 477 to 478 (IA), and Arg-516.

The protein in the N-terminal section; belongs to the sulfate adenylyltransferase family. In the C-terminal section; belongs to the APS kinase family. In terms of assembly, homohexamer. Dimer of trimers.

The protein localises to the cytoplasm. It carries out the reaction sulfate + ATP + H(+) = adenosine 5'-phosphosulfate + diphosphate. Its pathway is sulfur metabolism; hydrogen sulfide biosynthesis; sulfite from sulfate: step 1/3. Allosterically inhibited by 3'-phosphoadenosine 5'-phosphosulfate (PAPS). In terms of biological role, catalyzes the first intracellular reaction of sulfate assimilation, forming adenosine-5'-phosphosulfate (APS) from inorganic sulfate and ATP. Plays an important role in sulfate activation as a component of the biosynthesis pathway of sulfur-containing amino acids. This is Sulfate adenylyltransferase from Aspergillus clavatus (strain ATCC 1007 / CBS 513.65 / DSM 816 / NCTC 3887 / NRRL 1 / QM 1276 / 107).